Here is a 198-residue protein sequence, read N- to C-terminus: NAD(P)H dehydrogenase (quinone) (198 aa).

One can recognise a Flavodoxin-like domain in the interval 4-189 (ILVLYYSMYG…SIARYQGEYV (186 aa)). FMN contacts are provided by residues 10-15 (SMYGHI) and 78-80 (TRF). Y12 serves as a coordination point for NAD(+). W98 is a binding site for substrate. Residues 113–118 (STGTGG) and H133 each bind FMN.

Belongs to the WrbA family. FMN serves as cofactor.

It carries out the reaction a quinone + NADH + H(+) = a quinol + NAD(+). It catalyses the reaction a quinone + NADPH + H(+) = a quinol + NADP(+). This chain is NAD(P)H dehydrogenase (quinone), found in Citrobacter koseri (strain ATCC BAA-895 / CDC 4225-83 / SGSC4696).